Here is a 430-residue protein sequence, read N- to C-terminus: 3-phosphoshikimate 1-carboxyvinyltransferase (430 aa).

The 3-phosphoshikimate site is built by Lys33, Ser34, and Arg38. Lys33 lines the phosphoenolpyruvate pocket. 2 residues coordinate phosphoenolpyruvate: Gly101 and Arg129. 3-phosphoshikimate is bound by residues Ser172, Ser173, Gln174, Ser201, Glu319, and His346. Gln174 is a phosphoenolpyruvate binding site. The active-site Proton acceptor is the Glu319. The phosphoenolpyruvate site is built by Arg350, Arg391, and Lys416.

Belongs to the EPSP synthase family. In terms of assembly, monomer.

Its subcellular location is the cytoplasm. The catalysed reaction is 3-phosphoshikimate + phosphoenolpyruvate = 5-O-(1-carboxyvinyl)-3-phosphoshikimate + phosphate. The protein operates within metabolic intermediate biosynthesis; chorismate biosynthesis; chorismate from D-erythrose 4-phosphate and phosphoenolpyruvate: step 6/7. Catalyzes the transfer of the enolpyruvyl moiety of phosphoenolpyruvate (PEP) to the 5-hydroxyl of shikimate-3-phosphate (S3P) to produce enolpyruvyl shikimate-3-phosphate and inorganic phosphate. This Corynebacterium glutamicum (strain R) protein is 3-phosphoshikimate 1-carboxyvinyltransferase.